The sequence spans 225 residues: UPF0758 protein BPP1850 (225 aa).

The MPN domain occupies Ala103–Leu225. Zn(2+)-binding residues include His174, His176, and Asp187. Positions His174 to Asp187 match the JAMM motif motif.

This sequence belongs to the UPF0758 family.

The polypeptide is UPF0758 protein BPP1850 (Bordetella parapertussis (strain 12822 / ATCC BAA-587 / NCTC 13253)).